We begin with the raw amino-acid sequence, 783 residues long: NADH-quinone oxidoreductase subunit 3 (783 aa).

The 99-residue stretch at 1–99 (MVRVKVNDRI…GMVVDTLSDV (99 aa)) folds into the 2Fe-2S ferredoxin-type domain. 4 residues coordinate [2Fe-2S] cluster: Cys34, Cys45, Cys48, and Cys83. Positions 99-138 (VVREAQAGMVEFTLLNHPLDCPTCDKGGACELQDRTVEYG) constitute a 4Fe-4S His(Cys)3-ligated-type domain. 12 residues coordinate [4Fe-4S] cluster: His115, Cys119, Cys122, Cys128, Cys181, Cys184, Cys187, Cys230, Cys256, Cys259, Cys263, and Cys291. Residues 249–305 (MEETPTTCALCPVGCGITADTRSGELLRIRAREVPEVNEIWICDAGRFGHEWADQNR) form the 4Fe-4S Mo/W bis-MGD-type domain.

This sequence belongs to the complex I 75 kDa subunit family. NDH-1 is composed of 15 different subunits, Nqo1 to Nqo15. The complex has a L-shaped structure, with the hydrophobic arm (subunits Nqo7, Nqo8 and Nqo10 to Nqo14) embedded in the membrane and the hydrophilic peripheral arm (subunits Nqo1 to Nqo6, Nqo9 and Nqo15) protruding into the bacterial cytoplasm. The hydrophilic domain contains all the redox centers. The cofactor is [2Fe-2S] cluster. Requires [4Fe-4S] cluster as cofactor.

The protein localises to the cell membrane. The enzyme catalyses a quinone + NADH + 5 H(+)(in) = a quinol + NAD(+) + 4 H(+)(out). Its function is as follows. NDH-1 shuttles electrons from NADH, via FMN and iron-sulfur (Fe-S) centers, to quinones in the respiratory chain. The immediate electron acceptor for the enzyme in this species is menaquinone. Couples the redox reaction to proton translocation (for every two electrons transferred, four hydrogen ions are translocated across the cytoplasmic membrane), and thus conserves the redox energy in a proton gradient required for the synthesis of ATP. The polypeptide is NADH-quinone oxidoreductase subunit 3 (nqo3) (Thermus thermophilus (strain ATCC 27634 / DSM 579 / HB8)).